The sequence spans 30 residues: 2-enoate reductase (30 aa).

As to quaternary structure, dodecamer; tetramer of trimers. Iron-sulfur cluster is required as a cofactor. It depends on FAD as a cofactor. FMN serves as cofactor.

It catalyses the reaction butanoate + NAD(+) = (2E)-2-butenoate + NADH + H(+). Involved in fermentation of amino acids (Stickland reaction) such as leucine, isoleucine, valine and phenylalanine. In Clostridium tyrobutyricum, this protein is 2-enoate reductase.